Here is a 129-residue protein sequence, read N- to C-terminus: MAKEATRVRRRERKNISSGVAHVNSTFNNTMITITDAQGNAIAWSSAGAQGFKGSRKSTPFAAQIAAEDCAKKAQEHGMRSLEVEVCGPGSGRESALRALQAAGFVITSIRDVTPIPHNGCRPRKKRRV.

Belongs to the universal ribosomal protein uS11 family. As to quaternary structure, part of the 30S ribosomal subunit. Interacts with proteins S7 and S18. Binds to IF-3.

In terms of biological role, located on the platform of the 30S subunit, it bridges several disparate RNA helices of the 16S rRNA. Forms part of the Shine-Dalgarno cleft in the 70S ribosome. The chain is Small ribosomal subunit protein uS11 from Brucella abortus (strain S19).